The sequence spans 306 residues: Recombination-associated protein RdgC (306 aa).

It belongs to the RdgC family.

It localises to the cytoplasm. The protein localises to the nucleoid. In terms of biological role, may be involved in recombination. The sequence is that of Recombination-associated protein RdgC from Pseudomonas aeruginosa (strain ATCC 15692 / DSM 22644 / CIP 104116 / JCM 14847 / LMG 12228 / 1C / PRS 101 / PAO1).